A 113-amino-acid polypeptide reads, in one-letter code: U11-theraphotoxin-Hhn1u (113 aa).

Positions 1 to 21 are cleaved as a signal peptide; sequence MNTVRVTFLLVFVLAVSLGQA. Positions 22–74 are excised as a propeptide; that stretch reads DKDENRMEMQEKTEQGKSYLDFAENLLLQKLEELEAKLLEEDSEESRNSRQKR. 3 disulfides stabilise this stretch: Cys-75/Cys-90, Cys-82/Cys-95, and Cys-89/Cys-110.

It belongs to the neurotoxin 14 (magi-1) family. 01 (HNTX-16) subfamily. In terms of tissue distribution, expressed by the venom gland.

It localises to the secreted. In terms of biological role, probable ion channel inhibitor. The protein is U11-theraphotoxin-Hhn1u of Cyriopagopus hainanus (Chinese bird spider).